A 460-amino-acid chain; its full sequence is Exodeoxyribonuclease 7 large subunit (460 aa).

Belongs to the XseA family. As to quaternary structure, heterooligomer composed of large and small subunits.

Its subcellular location is the cytoplasm. It carries out the reaction Exonucleolytic cleavage in either 5'- to 3'- or 3'- to 5'-direction to yield nucleoside 5'-phosphates.. Bidirectionally degrades single-stranded DNA into large acid-insoluble oligonucleotides, which are then degraded further into small acid-soluble oligonucleotides. This is Exodeoxyribonuclease 7 large subunit from Edwardsiella ictaluri (strain 93-146).